The primary structure comprises 347 residues: MKPPIFIIIMTTVISGTMMVLISSHWLLIWIGFEMNMLAIIPILMKKFNPRAMEASTKYFLTQATASMILMLGIIINLLYSGQWTMLHTPNPMASNMMTIALTMKLGLSPFHFWVPEVTQGISLSSGMILLTWQKIAPLSVLYQMAPSINPNLLMSMAIMSMLVAGWGGLNQTQLRKILAYSSIGHMGWMTSITVYNPTLMHLNLVMYIMMTLGTFMLFMYNSSLTTLSLSYSWNKFPLTTLLILMLMLSLGGLPPLSGFIPKWMIIQELTKNNMIIIPTFMAIAALLSLYFYMRLTYTTALTMFPSMNNMKMKWQFENTKKITLLPPLIIMSTMLLPMTPMMLILY.

Helical transmembrane passes span 3–23 (PPIF…VLIS), 25–45 (HWLL…PILM), 59–79 (YFLT…INLL), 111–131 (FHFW…MILL), 149–169 (INPN…GWGG), 200–220 (LMHL…MLFM), 242–262 (LLIL…GFIP), 274–294 (NMII…YFYM), and 325–345 (LLPP…MMLI).

This sequence belongs to the complex I subunit 2 family. As to quaternary structure, core subunit of respiratory chain NADH dehydrogenase (Complex I) which is composed of 45 different subunits. Interacts with TMEM242.

Its subcellular location is the mitochondrion inner membrane. The catalysed reaction is a ubiquinone + NADH + 5 H(+)(in) = a ubiquinol + NAD(+) + 4 H(+)(out). In terms of biological role, core subunit of the mitochondrial membrane respiratory chain NADH dehydrogenase (Complex I) which catalyzes electron transfer from NADH through the respiratory chain, using ubiquinone as an electron acceptor. Essential for the catalytic activity and assembly of complex I. The sequence is that of NADH-ubiquinone oxidoreductase chain 2 from Ailurus fulgens (Himalayan red panda).